Here is a 1371-residue protein sequence, read N- to C-terminus: DNA-directed RNA polymerase subunit beta' (1371 aa).

Cys71, Cys73, Cys86, and Cys89 together coordinate Zn(2+). Residues Asp461, Asp463, and Asp465 each contribute to the Mg(2+) site. The Zn(2+) site is built by Cys803, Cys877, Cys884, and Cys887.

The protein belongs to the RNA polymerase beta' chain family. The RNAP catalytic core consists of 2 alpha, 1 beta, 1 beta' and 1 omega subunit. When a sigma factor is associated with the core the holoenzyme is formed, which can initiate transcription. The cofactor is Mg(2+). Zn(2+) serves as cofactor.

It carries out the reaction RNA(n) + a ribonucleoside 5'-triphosphate = RNA(n+1) + diphosphate. In terms of biological role, DNA-dependent RNA polymerase catalyzes the transcription of DNA into RNA using the four ribonucleoside triphosphates as substrates. This Thermodesulfovibrio yellowstonii (strain ATCC 51303 / DSM 11347 / YP87) protein is DNA-directed RNA polymerase subunit beta'.